We begin with the raw amino-acid sequence, 356 residues long: UDP-N-acetylglucosamine--N-acetylmuramyl-(pentapeptide) pyrophosphoryl-undecaprenol N-acetylglucosamine transferase (356 aa).

Residues 12–14 (TAG), Arg-166, Ser-196, and Gln-291 each bind UDP-N-acetyl-alpha-D-glucosamine.

Belongs to the glycosyltransferase 28 family. MurG subfamily.

It is found in the cell membrane. It carries out the reaction di-trans,octa-cis-undecaprenyl diphospho-N-acetyl-alpha-D-muramoyl-L-alanyl-D-glutamyl-meso-2,6-diaminopimeloyl-D-alanyl-D-alanine + UDP-N-acetyl-alpha-D-glucosamine = di-trans,octa-cis-undecaprenyl diphospho-[N-acetyl-alpha-D-glucosaminyl-(1-&gt;4)]-N-acetyl-alpha-D-muramoyl-L-alanyl-D-glutamyl-meso-2,6-diaminopimeloyl-D-alanyl-D-alanine + UDP + H(+). The protein operates within cell wall biogenesis; peptidoglycan biosynthesis. In terms of biological role, cell wall formation. Catalyzes the transfer of a GlcNAc subunit on undecaprenyl-pyrophosphoryl-MurNAc-pentapeptide (lipid intermediate I) to form undecaprenyl-pyrophosphoryl-MurNAc-(pentapeptide)GlcNAc (lipid intermediate II). This is UDP-N-acetylglucosamine--N-acetylmuramyl-(pentapeptide) pyrophosphoryl-undecaprenol N-acetylglucosamine transferase from Geobacillus thermodenitrificans (strain NG80-2).